A 290-amino-acid chain; its full sequence is Small ribosomal subunit biogenesis GTPase RsgA (290 aa).

Residues 61 to 218 form the CP-type G domain; it reads SSELLRPAVA…IVDTPGFSTL (158 aa). GTP-binding positions include 110 to 113 and 161 to 169; these read NKVD and GPSGAGKST. 4 residues coordinate Zn(2+): Cys-243, Cys-248, His-250, and Cys-256.

The protein belongs to the TRAFAC class YlqF/YawG GTPase family. RsgA subfamily. As to quaternary structure, monomer. Associates with 30S ribosomal subunit, binds 16S rRNA. Zn(2+) serves as cofactor.

The protein resides in the cytoplasm. Functionally, one of several proteins that assist in the late maturation steps of the functional core of the 30S ribosomal subunit. Helps release RbfA from mature subunits. May play a role in the assembly of ribosomal proteins into the subunit. Circularly permuted GTPase that catalyzes slow GTP hydrolysis, GTPase activity is stimulated by the 30S ribosomal subunit. This Clostridium botulinum (strain Eklund 17B / Type B) protein is Small ribosomal subunit biogenesis GTPase RsgA.